The primary structure comprises 303 residues: Monoglyceride lipase (303 aa).

Residue threonine 10 is modified to Phosphothreonine. At tyrosine 58 the chain carries 3'-nitrotyrosine. Residue serine 122 is the Nucleophile of the active site. Serine 189 bears the Phosphoserine mark. Catalysis depends on charge relay system residues aspartate 239 and histidine 269.

Belongs to the AB hydrolase superfamily. Monoacylglycerol lipase family. In terms of assembly, homodimer. In terms of tissue distribution, ubiquitous.

It is found in the cytoplasm. It localises to the cytosol. Its subcellular location is the membrane. The enzyme catalyses Hydrolyzes glycerol monoesters of long-chain fatty acids.. It carries out the reaction a 1-acylglycerol + H2O = glycerol + a fatty acid + H(+). It catalyses the reaction a 2-acylglycerol + H2O = glycerol + a fatty acid + H(+). The catalysed reaction is 2-(5Z,8Z,11Z,14Z-eicosatetraenoyl)-glycerol + H2O = glycerol + (5Z,8Z,11Z,14Z)-eicosatetraenoate + H(+). The enzyme catalyses 1-octanoylglycerol + H2O = octanoate + glycerol + H(+). It carries out the reaction 1-decanoylglycerol + H2O = decanoate + glycerol + H(+). It catalyses the reaction 1-dodecanoylglycerol + H2O = dodecanoate + glycerol + H(+). The catalysed reaction is 1-tetradecanoylglycerol + H2O = tetradecanoate + glycerol + H(+). The enzyme catalyses 2-hexadecanoylglycerol + H2O = glycerol + hexadecanoate + H(+). It carries out the reaction 1-(9Z-octadecenoyl)-glycerol + H2O = glycerol + (9Z)-octadecenoate + H(+). It catalyses the reaction 2-(9Z-octadecenoyl)-glycerol + H2O = glycerol + (9Z)-octadecenoate + H(+). The catalysed reaction is 2-(9Z,12Z-octadecadienoyl)-glycerol + H2O = (9Z,12Z)-octadecadienoate + glycerol + H(+). The enzyme catalyses 1-(5Z,8Z,11Z,14Z-eicosatetraenoyl)-glycerol + H2O = glycerol + (5Z,8Z,11Z,14Z)-eicosatetraenoate + H(+). It carries out the reaction 1-(9Z,12Z-octadecadienoyl)-glycerol + H2O = (9Z,12Z)-octadecadienoate + glycerol + H(+). It catalyses the reaction 1-hexadecanoylglycerol + H2O = glycerol + hexadecanoate + H(+). The catalysed reaction is 1-octadecanoylglycerol + H2O = octadecanoate + glycerol + H(+). The enzyme catalyses prostaglandin E2 1-glyceryl ester + H2O = prostaglandin E2 + glycerol + H(+). It carries out the reaction prostaglandin D2-1-glycerol ester + H2O = prostaglandin D2 + glycerol + H(+). It catalyses the reaction 2-glyceryl-15-deoxy-Delta(12,14)-prostaglandin J2 + H2O = 15-deoxy-Delta(12,14)-prostaglandin J2 + glycerol + H(+). The catalysed reaction is prostaglandin F2alpha 1-glyceryl ester + H2O = prostaglandin F2alpha + glycerol + H(+). It functions in the pathway glycerolipid metabolism; triacylglycerol degradation. Functionally, converts monoacylglycerides to free fatty acids and glycerol. Hydrolyzes the endocannabinoid 2-arachidonoylglycerol, and thereby contributes to the regulation of endocannabinoid signaling, nociperception and perception of pain. Regulates the levels of fatty acids that serve as signaling molecules and promote cancer cell migration, invasion and tumor growth. The protein is Monoglyceride lipase of Mus musculus (Mouse).